The following is a 50-amino-acid chain: Ampulexin 1 (50 aa).

Residues 1–26 (MKAIMVLFYVMMLTIIASVSMVNGSP) form the signal peptide.

In terms of assembly, monomer. In terms of tissue distribution, expressed in venom sac and, to a lesser extent, in venom gland. Not expressed in brain.

It localises to the secreted. Amphipathic peptide which probably adopts an alpha-helical structure. When injected in subesophageal ganglia of cockroach P.americana, a natural host for larvae of A.compressa, dampens the escape response for about 1 hour which may contribute to early stages of hypokinesia. Has no antimicrobial activity against E.coli DH5alpha or B.thuringiensis. Is not cytotoxic in vitro. The polypeptide is Ampulexin 1 (Ampulex compressa (Emerald cockroach wasp)).